The chain runs to 310 residues: tRNA dimethylallyltransferase (310 aa).

Residue 10–17 participates in ATP binding; the sequence is GPTAVGKS. 12–17 is a substrate binding site; the sequence is TAVGKS. Residues 35–38 form an interaction with substrate tRNA region; the sequence is DSMQ.

This sequence belongs to the IPP transferase family. Monomer. Mg(2+) is required as a cofactor.

The catalysed reaction is adenosine(37) in tRNA + dimethylallyl diphosphate = N(6)-dimethylallyladenosine(37) in tRNA + diphosphate. Catalyzes the transfer of a dimethylallyl group onto the adenine at position 37 in tRNAs that read codons beginning with uridine, leading to the formation of N6-(dimethylallyl)adenosine (i(6)A). The polypeptide is tRNA dimethylallyltransferase (Clostridium perfringens (strain 13 / Type A)).